Reading from the N-terminus, the 467-residue chain is Mothers against decapentaplegic homolog 9 (467 aa).

One can recognise an MH1 domain in the interval 16-140 (PAVKRLLGWK…YRRVETPVLP (125 aa)). 4 residues coordinate Zn(2+): cysteine 68, cysteine 113, cysteine 125, and histidine 130. The tract at residues 174-246 (NATYPDSFQQ…SETQSGQPVD (73 aa)) is disordered. Positions 205 to 220 (SYPHSPGSPSEPESPY) are enriched in low complexity. Residues 273–467 (WCSVAYYELN…SPHNPISSVS (195 aa)) form the MH2 domain.

This sequence belongs to the dwarfin/SMAD family. In terms of assembly, interaction with the co-SMAD SMAD4. Interacts with PEBP2-alpha subunit. Interacts with RANBP3L. Phosphorylated on serine by BMP (bone morphogenetic proteins) type 1 receptor kinase. Expressed in heart, brain, placenta, lung, skeletal muscle, prostate, testis, ovary and small intestine. Also expressed in fetal brain, lung and kidney.

It is found in the cytoplasm. Its subcellular location is the nucleus. In terms of biological role, transcriptional modulator activated by BMP (bone morphogenetic proteins) type 1 receptor kinase. SMAD9 is a receptor-regulated SMAD (R-SMAD). In Homo sapiens (Human), this protein is Mothers against decapentaplegic homolog 9 (SMAD9).